The chain runs to 126 residues: Desulfoferrodoxin (126 aa).

Fe cation-binding residues include Cys10, Cys13, Cys29, Cys30, His49, His69, His75, Cys116, and His119.

Belongs to the desulfoferrodoxin family. Homodimer. Fe(3+) serves as cofactor. It depends on Cu(2+) as a cofactor.

It carries out the reaction reduced [rubredoxin] + superoxide + 2 H(+) = oxidized [rubredoxin] + H2O2. Catalyzes the one-electron reduction of superoxide anion radical to hydrogen peroxide at a nonheme ferrous iron center. Plays a fundamental role in case of oxidative stress via its superoxide detoxification activity. This chain is Desulfoferrodoxin (dfx), found in Syntrophotalea carbinolica (strain DSM 2380 / NBRC 103641 / GraBd1) (Pelobacter carbinolicus).